We begin with the raw amino-acid sequence, 475 residues long: UDP-N-acetylmuramate--L-alanine ligase (475 aa).

Position 125-131 (125-131 (GTHGKTT)) interacts with ATP.

The protein belongs to the MurCDEF family.

It is found in the cytoplasm. The catalysed reaction is UDP-N-acetyl-alpha-D-muramate + L-alanine + ATP = UDP-N-acetyl-alpha-D-muramoyl-L-alanine + ADP + phosphate + H(+). It participates in cell wall biogenesis; peptidoglycan biosynthesis. Its function is as follows. Cell wall formation. The polypeptide is UDP-N-acetylmuramate--L-alanine ligase (Actinobacillus pleuropneumoniae serotype 7 (strain AP76)).